Consider the following 814-residue polypeptide: Spore development regulator umv1 (814 aa).

Disordered regions lie at residues 1–36 (MSRPESRSGNASTPQGTSVLKADDGGSGQTPGGSTE), 96–134 (HDRPIRQSDPVGSASVAPPVERRPGQGAAAPQTPGVRRG), 267–333 (QGLK…MPRS), 407–441 (PPRDFADGRYMDGDYPPHTRSAAAPLSSMSARAGP), 457–501 (PVRS…ASLT), and 539–814 (QSSG…NQPY). Over residues 7–18 (RSGNASTPQGTS) the composition is skewed to polar residues. The Velvet domain occupies 53–274 (RDHIEYQLTV…AEQGLKVRVR (222 aa)). Residues 271–285 (VRVRKHPRSRRRGSK) are compositionally biased toward basic residues. The segment covering 407 to 423 (PPRDFADGRYMDGDYPP) has biased composition (basic and acidic residues). A Nuclear localization signal motif is present at residues 438–445 (RAGPSEYS). Residues 620–631 (AAARRSPIPSAR) are compositionally biased toward low complexity. Composition is skewed to basic and acidic residues over residues 723 to 741 (TRDRDREAAYIAMPRDRDQ) and 760 to 796 (GELDQRDREWEWECERERERERERKRGPASPEYRRDF). Over residues 800-814 (TMPSKPSSRGHNQPY) the composition is skewed to polar residues.

It belongs to the velvet family. VosA subfamily. As to quaternary structure, forms a heterodimeric complex with velB; the formation of the VEL2-VOS1 complex is light-dependent.

It localises to the nucleus. Functionally, component of the velB-VosA heterodimeric complex that plays a dual role in activating genes associated with spore maturation and repressing certain development-associated genes. The complex binds DNA through the DNA-binding domain of vosA that recognizes an 11-nucleotide consensus sequence 5'-CTGGCCGCGGC-3' consisting of two motifs in the promoters of key developmental regulatory genes. Required for gall induction and teliospore formation on seedlings. In Mycosarcoma maydis (Corn smut fungus), this protein is Spore development regulator umv1.